Reading from the N-terminus, the 564-residue chain is Proline--tRNA ligase (564 aa).

The protein belongs to the class-II aminoacyl-tRNA synthetase family. ProS type 1 subfamily. In terms of assembly, homodimer.

The protein localises to the cytoplasm. It catalyses the reaction tRNA(Pro) + L-proline + ATP = L-prolyl-tRNA(Pro) + AMP + diphosphate. Functionally, catalyzes the attachment of proline to tRNA(Pro) in a two-step reaction: proline is first activated by ATP to form Pro-AMP and then transferred to the acceptor end of tRNA(Pro). As ProRS can inadvertently accommodate and process non-cognate amino acids such as alanine and cysteine, to avoid such errors it has two additional distinct editing activities against alanine. One activity is designated as 'pretransfer' editing and involves the tRNA(Pro)-independent hydrolysis of activated Ala-AMP. The other activity is designated 'posttransfer' editing and involves deacylation of mischarged Ala-tRNA(Pro). The misacylated Cys-tRNA(Pro) is not edited by ProRS. The chain is Proline--tRNA ligase from Xanthomonas axonopodis pv. citri (strain 306).